The primary structure comprises 286 residues: MHTRKAITEAIRKLGVQTGDLLMVHASLKAIGPVEGGAETVVAALRSAVGPTGTVMGYASWDRSPYEETLNGARLDDKARRTWPPFDPATAGTYRGFGLLNQFLVQAPGARRSAHPDASMVAVGPLAETLTEPHELGHALGEGSPVERFVRLGGKALLLGAPLNSVTALHYAEAVADIPNKRWVTYEMPMLGRNGEVAWKTASEYDSNGILDCFAIEGKPDAVETIANAYVKLGRHREGVVGFAQCYLFDAQDIVTFGVTYLEKHFGATPIVPAHEAAQRSCEPSG.

The protein belongs to the antibiotic N-acetyltransferase family.

It carries out the reaction a 2-deoxystreptamine antibiotic + acetyl-CoA = an N(3)-acetyl-2-deoxystreptamine antibiotic + CoA + H(+). Resistance to antibiotics containing the 2-deoxy-streptamine ring including gentamicin, kanamycin, tobramycin, neomycin and apramycin. The sequence is that of Aminoglycoside N(3)-acetyltransferase III (aacC3) from Salmonella sp.